The following is a 228-amino-acid chain: UPF0173 metal-dependent hydrolase BLi03080/BL00413 (228 aa).

Belongs to the UPF0173 family.

This chain is UPF0173 metal-dependent hydrolase BLi03080/BL00413, found in Bacillus licheniformis (strain ATCC 14580 / DSM 13 / JCM 2505 / CCUG 7422 / NBRC 12200 / NCIMB 9375 / NCTC 10341 / NRRL NRS-1264 / Gibson 46).